Consider the following 170-residue polypeptide: Cathelicidin antimicrobial peptide (170 aa).

An N-terminal signal peptide occupies residues 1–30 (MKTQMDGHSLGRWSLVLLLLGLVMPLAIVA). A propeptide spans 31–131 (QVLSYKEAVL…DISCDKDNRR (101 aa)) (cathelin-like domain (CLD)). Intrachain disulfides connect C86–C97 and C108–C125. Positions 150 to 162 (FKRIVQRIKDFLR) are active core.

It belongs to the cathelicidin family. As to quaternary structure, monomer, homodimer or homotrimer (in vitro). Oligomerizes as tetra- or hexamer in solution (in vitro). In terms of processing, proteolytically cleaved by proteinase PRTN3 into antibacterial peptide LL-37. Proteolytically cleaved by cathepsin CTSG and neutrophil elastase ELANE. Resistant to proteolytic degradation in solution, and when bound to both zwitterionic (mimicking mammalian membranes) and negatively charged membranes (mimicking bacterial membranes). Post-translationally, after secretion onto the skin surface, the CAMP gene product is processed by a serine protease-dependent mechanism into multiple novel antimicrobial peptides distinct from and shorter than cathelicidin LL-37. These peptides show enhanced antimicrobial action, acquiring the ability to kill skin pathogens such as S.aureus, E.coli and C.albicans. These peptides have lost the ability to stimulate CXCL8/IL8 release from keratinocytes. The peptides act synergistically, killing bacteria at lower concentrations when present together, and maintain activity at increased salt condition.

Its subcellular location is the secreted. The protein localises to the vesicle. Its function is as follows. Antimicrobial protein that is an integral component of the innate immune system. Binds to bacterial lipopolysaccharides (LPS). Acts via neutrophil N-formyl peptide receptors to enhance the release of CXCL2. Postsecretory processing generates multiple cathelicidin antimicrobial peptides with various lengths which act as a topical antimicrobial defense in sweat on skin. The unprocessed precursor form, cathelicidin antimicrobial peptide, inhibits the growth of Gram-negative E.coli and E.aerogenes with efficiencies comparable to that of the mature peptide LL-37 (in vitro). Functionally, antimicrobial peptide that is an integral component of the innate immune system. Binds to bacterial lipopolysaccharides (LPS). Causes membrane permeabilization by forming transmembrane pores (in vitro). Causes lysis of E.coli. Exhibits antimicrobial activity against Gram-negative bacteria such as P.aeruginosa, S.typhimurium, E.aerogenes, E.coli and P.syringae, Gram-positive bacteria such as L.monocytogenes, S.epidermidis, S.pyogenes and S.aureus, as well as vancomycin-resistant enterococci (in vitro). Exhibits antimicrobial activity against methicillin-resistant S.aureus, P.mirabilis, and C.albicans in low-salt media, but not in media containing 100 mM NaCl (in vitro). Forms chiral supramolecular assemblies with quinolone signal (PQS) molecules of P.aeruginosa, which may lead to interference of bacterial quorum signaling and perturbance of bacterial biofilm formation. May form supramolecular fiber-like assemblies on bacterial membranes. Induces cytokine and chemokine producation as well as TNF/TNFA and CSF2/GMCSF production in normal human keratinocytes. Exhibits hemolytic activity against red blood cells. Exhibits antimicrobial activity against E.coli and B.megaterium (in vitro). The polypeptide is Cathelicidin antimicrobial peptide (Pongo pygmaeus (Bornean orangutan)).